The following is a 68-amino-acid chain: Neuronal regeneration-related protein (68 aa).

The tract at residues 42–68 is disordered; sequence EETGAASLTPPGSREFTSPATSYLHPF.

As to quaternary structure, interacts with FLNA. Interacts with the latency-associated peptides (LAP) of TGFB1 and TGFB2; the interaction results in a decrease in TGFB autoinduction. Post-translationally, phosphorylated on Ser-59. Phosphorylation decreases stability and activity. Expressed in brain and fetal lung.

It localises to the cytoplasm. Functionally, may have roles in cellular differentiation. Ectopic expression induces differentiation of fibroblast into myofibroblast and myofibroblast ameboid migration. Increases retinoic-acid regulation of lipid-droplet biogenesis. May also have neural functions. Promotes axonal regeneration and augments motility of gliomas. Down-regulates the expression of TGFB1 and TGFB2 but not of TGFB3. May play a role in the regulation of alveolar generation. The chain is Neuronal regeneration-related protein (Nrep) from Mus musculus (Mouse).